Here is a 445-residue protein sequence, read N- to C-terminus: tRNA modification GTPase MnmE (445 aa).

Residues Arg-20, Glu-79, and Lys-119 each contribute to the (6S)-5-formyl-5,6,7,8-tetrahydrofolate site. The TrmE-type G domain maps to 215–371 (GLKLAIIGPP…ILKNIENIAE (157 aa)). Residue Asn-225 coordinates K(+). Residues 225–230 (NTGKSS), 244–250 (SNIAGTT), and 269–272 (DTAG) each bind GTP. Ser-229 provides a ligand contact to Mg(2+). Ser-244, Ile-246, and Thr-249 together coordinate K(+). Thr-250 is a Mg(2+) binding site. Position 445 (Lys-445) interacts with (6S)-5-formyl-5,6,7,8-tetrahydrofolate.

This sequence belongs to the TRAFAC class TrmE-Era-EngA-EngB-Septin-like GTPase superfamily. TrmE GTPase family. As to quaternary structure, homodimer. Heterotetramer of two MnmE and two MnmG subunits. The cofactor is K(+).

Its subcellular location is the cytoplasm. In terms of biological role, exhibits a very high intrinsic GTPase hydrolysis rate. Involved in the addition of a carboxymethylaminomethyl (cmnm) group at the wobble position (U34) of certain tRNAs, forming tRNA-cmnm(5)s(2)U34. This is tRNA modification GTPase MnmE from Rickettsia typhi (strain ATCC VR-144 / Wilmington).